The sequence spans 597 residues: Cytosolic Fe-S cluster assembly factor nar1 (597 aa).

Cys-20 contributes to the [4Fe-4S] cluster binding site. The disordered stretch occupies residues 25–46 (ESLPQKESQSENPYEVTKEDKV). [4Fe-4S] cluster contacts are provided by Cys-61, Cys-64, Cys-67, Cys-208, and Cys-263. The tract at residues 424 to 449 (RLPGAKPQAVSSSANRRQPMSRNAAP) is disordered. Positions 432-444 (AVSSSANRRQPMS) are enriched in polar residues. The [4Fe-4S] cluster site is built by Cys-464 and Cys-468.

The protein belongs to the NARF family.

Its function is as follows. Component of the cytosolic Fe/S protein assembly machinery. Required for maturation of extramitochondrial Fe/S proteins. May play a role in the transfer of pre-assembled Fe/S clusters to target apoproteins. This chain is Cytosolic Fe-S cluster assembly factor nar1 (nar1), found in Aspergillus fumigatus (strain ATCC MYA-4609 / CBS 101355 / FGSC A1100 / Af293) (Neosartorya fumigata).